The primary structure comprises 125 residues: Aspercryptin biosynthesis cluster protein K (125 aa).

The interval 104–125 is disordered; the sequence is QRAESVAGDSRPREHRQGAVGY. Residues 113 to 125 show a composition bias toward basic and acidic residues; that stretch reads SRPREHRQGAVGY.

Its pathway is secondary metabolite biosynthesis. Part of the gene cluster that mediates the biosynthesis of aspercryptins, linear lipopeptides built from six amino acids including 2 highly unusual and nonproteogenic amino acids, 2-amino-octanoic acid (2aoa) and 2-amino-dodecanol (2adol). The core structure of aspercryptins is as follows: Ser/Ala-Thr-Ile/Val-2aoa-Asn-2adol. The first step of aspercryptin biosynthesis is the generation of the fatty acid precursors, octanoic and dodecanoic acids, by the FAS subunits atnF and atnM. The fatty acid precursors are likely transformed into the corresponding alpha-amino fatty acids in three steps. First, they are hydroxylated by the cytochrome P450 monooxygenase atnE, then oxidized to the corresponding alpha-keto acids by the NAD(P)-dependent oxidoreductase atnD, and finally converted to the alpha-amino fatty acids by the PLP-dependent aminotransferases atnH or atnJ. the alpha-amino fatty acids, 2-amino-octanoic and 2-amino-dodecanoic acids, are recognized, activated, and covalently tethered to the NRPS atnA by its fourth and sixth adenylation domains. The second module of atnA is the Thr module and contains an epimerase (E) domain responsible for the epimerization of Thr to D-allo-Thr. Additionally, despite atnA having only one epimerase domain, the first amino acid of aspercryptin A1 is D-Ser, suggesting that serine is either loaded directly as D-Ser on the first module or that the epimerase domain in the threonine module epimerizes both L-Ser and L-Thr. After condensation of the hexapeptide of aspercryptin, the C-terminal reductase (TE) domain might be involved in the reductive release and production of the aldehyde hexapeptide. Further reduction would generate aspercryptins. The variety of aspercryptins produced reflects the flexibility of the atnA NRPS, allowing incorporation of alanine instead of serine, valine for isoleucine, and a C10 fatty amino alcohol instead of the C12 version. AtnB seems to be involved in the selectivity for Ile versus Val by the third module. Moreover, type B, C and D aspercryptins have an additional N-terminal cichorine, acetyl and propionyl group respectively. This is Aspercryptin biosynthesis cluster protein K from Emericella nidulans (strain FGSC A4 / ATCC 38163 / CBS 112.46 / NRRL 194 / M139) (Aspergillus nidulans).